A 353-amino-acid polypeptide reads, in one-letter code: 3-dehydroquinate synthase (353 aa).

NAD(+)-binding positions include 61-66 (DGEEAK), 119-120 (TT), K132, and K141. Zn(2+) is bound by residues E174, H238, and H254.

This sequence belongs to the sugar phosphate cyclases superfamily. Dehydroquinate synthase family. Co(2+) serves as cofactor. The cofactor is Zn(2+). NAD(+) is required as a cofactor.

The protein localises to the cytoplasm. The catalysed reaction is 7-phospho-2-dehydro-3-deoxy-D-arabino-heptonate = 3-dehydroquinate + phosphate. The protein operates within metabolic intermediate biosynthesis; chorismate biosynthesis; chorismate from D-erythrose 4-phosphate and phosphoenolpyruvate: step 2/7. Catalyzes the conversion of 3-deoxy-D-arabino-heptulosonate 7-phosphate (DAHP) to dehydroquinate (DHQ). The sequence is that of 3-dehydroquinate synthase from Sulfolobus acidocaldarius (strain ATCC 33909 / DSM 639 / JCM 8929 / NBRC 15157 / NCIMB 11770).